The following is a 207-amino-acid chain: LexA repressor (207 aa).

Positions 28–48 (RAEIASRLGFKSANAAEEHLK) form a DNA-binding region, H-T-H motif. Active-site for autocatalytic cleavage activity residues include Ser-124 and Lys-161.

This sequence belongs to the peptidase S24 family. Homodimer.

The catalysed reaction is Hydrolysis of Ala-|-Gly bond in repressor LexA.. Represses a number of genes involved in the response to DNA damage (SOS response), including recA and lexA. In the presence of single-stranded DNA, RecA interacts with LexA causing an autocatalytic cleavage which disrupts the DNA-binding part of LexA, leading to derepression of the SOS regulon and eventually DNA repair. The chain is LexA repressor from Shewanella amazonensis (strain ATCC BAA-1098 / SB2B).